A 415-amino-acid polypeptide reads, in one-letter code: D-galactonate dehydratase family member RspA (415 aa).

Residues asparagine 48 and histidine 133 each coordinate substrate. Tyrosine 170 acts as the Proton donor/acceptor in catalysis. A Mg(2+)-binding site is contributed by aspartate 223. Histidine 225 (proton donor/acceptor) is an active-site residue. Mg(2+)-binding residues include glutamate 249 and glutamate 275. The substrate site is built by glutamate 275, arginine 296, histidine 325, aspartate 329, and glutamate 352.

Belongs to the mandelate racemase/muconate lactonizing enzyme family. GalD subfamily. Mg(2+) is required as a cofactor.

It catalyses the reaction D-mannonate = 2-dehydro-3-deoxy-D-gluconate + H2O. In terms of biological role, has low D-mannonate dehydratase activity (in vitro), suggesting that this is not a physiological substrate and that it has no significant role in D-mannonate degradation in vivo. Has no detectable activity with a panel of 70 other acid sugars (in vitro). This chain is D-galactonate dehydratase family member RspA (rspA), found in Escherichia coli (strain MS 21-1).